A 443-amino-acid polypeptide reads, in one-letter code: MRTAPRSQLNRAIAPCRKRGPRRVAMVSMHTSPLEQPGTGDAGGMNVYVLQTARRLADRGVAVEIFTRATSSEQPPALSPSEGITVHYVPAGPFEGLSKGDLPSQLCAFTNGVLRAEAAQPPGYFDVIHSHYWLSGQAAWLAAERWGVPHIHSAHTLAKVKNLHLAAEDTPEPFTRVVGEEQVVAESDALVTNTSSEAEVLVDLYRADPDKVTVTPPGVDPEVFTPGDKLAARRRLGLPDDALVLGFAGRIQPLKAPDVLVRAVARLRALNPELAPRLRLVVVGGPSGNGADNPRWLHDLAAELGIADAVTFLKPRAGHELAEVFRACDVVGVPSYNETFGLVALEAQACGTPVVAAAVGGLTTAVADGHSGLLIRGHDETDWANALDKLVTDAPRRARLAAGALDHAARFTWSHTADDLLGAYGDAIQRRAVSPRRSPASKR.

H30 contacts 1D-myo-inositol 3-phosphate. Residues 36–37 (QP) and G44 contribute to the UDP-N-acetyl-alpha-D-glucosamine site. Residues 41–46 (DAGGMN), K99, Y132, T156, and R176 each bind 1D-myo-inositol 3-phosphate. The UDP-N-acetyl-alpha-D-glucosamine site is built by R250, K255, and R316. Mg(2+) is bound by residues F325, R326, and C328. Residues E338 and E346 each contribute to the UDP-N-acetyl-alpha-D-glucosamine site. T352 serves as a coordination point for Mg(2+).

It belongs to the glycosyltransferase group 1 family. MshA subfamily. In terms of assembly, homodimer.

It carries out the reaction 1D-myo-inositol 3-phosphate + UDP-N-acetyl-alpha-D-glucosamine = 1D-myo-inositol 2-acetamido-2-deoxy-alpha-D-glucopyranoside 3-phosphate + UDP + H(+). Its function is as follows. Catalyzes the transfer of a N-acetyl-glucosamine moiety to 1D-myo-inositol 3-phosphate to produce 1D-myo-inositol 2-acetamido-2-deoxy-glucopyranoside 3-phosphate in the mycothiol biosynthesis pathway. This Stackebrandtia nassauensis (strain DSM 44728 / CIP 108903 / NRRL B-16338 / NBRC 102104 / LLR-40K-21) protein is D-inositol 3-phosphate glycosyltransferase.